Consider the following 978-residue polypeptide: Macrophage colony-stimulating factor 1 receptor (978 aa).

The N-terminal stretch at 1 to 19 is a signal peptide; it reads MELGPPLVLLLATVWHGQG. Residues 20 to 515 are Extracellular-facing; the sequence is APVIEPSGPE…QLPDESLFTP (496 aa). 5 consecutive Ig-like C2-type domains span residues 24–104, 107–197, 204–298, 299–397, and 398–503; these read EPSG…VKDP, SWNL…KVNR, QIKL…VVES, AYLN…LTLR, and YPPE…SLGQ. Disulfide bonds link Cys-42–Cys-84, Cys-127–Cys-177, and Cys-224–Cys-278. Asn-45 and Asn-73 each carry an N-linked (GlcNAc...) asparagine glycan. N-linked (GlcNAc...) asparagine glycosylation is found at Asn-302, Asn-335, Asn-389, Asn-410, Asn-449, Asn-478, and Asn-491. A disulfide bond links Cys-417 and Cys-483. A helical transmembrane segment spans residues 516–536; the sequence is VVVACMSVMSLLVLLLLLLLY. Over 537–978 the chain is Cytoplasmic; sequence KYKQKPKYQV…LQPNNYQFAC (442 aa). The interval 540-572 is regulatory juxtamembrane domain; it reads QKPKYQVRWKIIERYEGNSYTFIDPTQLPYNEK. 2 positions are modified to phosphotyrosine; by autocatalysis: Tyr-544 and Tyr-559. Residues 580–914 enclose the Protein kinase domain; the sequence is LQFGKTLGAG…CFLLQEQARL (335 aa). ATP-binding positions include 586 to 594 and Lys-614; that span reads LGAGAFGKV. Phosphotyrosine; by autocatalysis is present on residues Tyr-697 and Tyr-706. Ser-711 is modified (phosphoserine). A Phosphotyrosine; by autocatalysis modification is found at Tyr-721. Residue Asp-776 is the Proton acceptor of the active site. Positions 794–816 are activation loop; sequence DFGLARDIMNDSNYVVKGNARLP. 2 positions are modified to phosphotyrosine; by autocatalysis: Tyr-807 and Tyr-921. The disordered stretch occupies residues 921 to 957; sequence YANLPSSGGSSGSDSGGGSSGGSSSEPEEESSSEHLA. Gly residues predominate over residues 929-941; that stretch reads GSSGSDSGGGSSG. Tyr-974 carries the phosphotyrosine; by autocatalysis modification.

It belongs to the protein kinase superfamily. Tyr protein kinase family. CSF-1/PDGF receptor subfamily. In terms of assembly, monomer. Homodimer. Interacts with CSF1 and IL34. Interaction with dimeric CSF1 or IL34 leads to receptor homodimerization. Interacts with INPPL1/SHIP2 and THOC5. Interacts (tyrosine phosphorylated) with PLCG2 (via SH2 domain). Interacts (tyrosine phosphorylated) with PIK3R1 (via SH2 domain). Interacts (tyrosine phosphorylated) with FYN, YES1 and SRC (via SH2 domain). Interacts (tyrosine phosphorylated) with CBL, GRB2 and SLA2. In terms of processing, autophosphorylated in response to CSF1 or IL34 binding. Phosphorylation at Tyr-559 is important for normal down-regulation of signaling by ubiquitination, internalization and degradation. Phosphorylation at Tyr-559 and Tyr-807 is important for interaction with SRC family members, including FYN, YES1 and SRC, and for subsequent activation of these protein kinases. Phosphorylation at Tyr-697 and Tyr-921 is important for interaction with GRB2. Phosphorylation at Tyr-721 is important for interaction with PIK3R1. Phosphorylation at Tyr-721 and Tyr-807 is important for interaction with PLCG2. Phosphorylation at Tyr-974 is important for interaction with CBL. Dephosphorylation by PTPN2 negatively regulates downstream signaling and macrophage differentiation. Ubiquitinated. Becomes rapidly polyubiquitinated after autophosphorylation, leading to its degradation.

It is found in the cell membrane. It catalyses the reaction L-tyrosyl-[protein] + ATP = O-phospho-L-tyrosyl-[protein] + ADP + H(+). Present in an inactive conformation in the absence of bound ligand. CSF1 or IL34 binding leads to dimerization and activation by autophosphorylation on tyrosine residues. Its function is as follows. Tyrosine-protein kinase that acts as a cell-surface receptor for CSF1 and IL34 and plays an essential role in the regulation of survival, proliferation and differentiation of hematopoietic precursor cells, especially mononuclear phagocytes, such as macrophages and monocytes. Promotes the release of pro-inflammatory chemokines in response to IL34 and CSF1, and thereby plays an important role in innate immunity and in inflammatory processes. Plays an important role in the regulation of osteoclast proliferation and differentiation, the regulation of bone resorption, and is required for normal bone and tooth development. Required for normal male and female fertility, and for normal development of milk ducts and acinar structures in the mammary gland during pregnancy. Promotes reorganization of the actin cytoskeleton, regulates formation of membrane ruffles, cell adhesion and cell migration, and promotes cancer cell invasion. Activates several signaling pathways in response to ligand binding, including the ERK1/2 and the JNK pathway. Phosphorylates PIK3R1, PLCG2, GRB2, SLA2 and CBL. Activation of PLCG2 leads to the production of the cellular signaling molecules diacylglycerol and inositol 1,4,5-trisphosphate, that then lead to the activation of protein kinase C family members, especially PRKCD. Phosphorylation of PIK3R1, the regulatory subunit of phosphatidylinositol 3-kinase, leads to activation of the AKT1 signaling pathway. Activated CSF1R also mediates activation of the MAP kinases MAPK1/ERK2 and/or MAPK3/ERK1, and of the SRC family kinases SRC, FYN and YES1. Activated CSF1R transmits signals both via proteins that directly interact with phosphorylated tyrosine residues in its intracellular domain, or via adapter proteins, such as GRB2. Promotes activation of STAT family members STAT3, STAT5A and/or STAT5B. Promotes tyrosine phosphorylation of SHC1 and INPP5D/SHIP-1. Receptor signaling is down-regulated by protein phosphatases, such as INPP5D/SHIP-1, that dephosphorylate the receptor and its downstream effectors, and by rapid internalization of the activated receptor. In the central nervous system, may play a role in the development of microglia macrophages. The chain is Macrophage colony-stimulating factor 1 receptor (Csf1r) from Rattus norvegicus (Rat).